We begin with the raw amino-acid sequence, 728 residues long: MSLSHVAPSHDAYGQAKRRKVRKGTHSCWECKRRKMKCRFDPRIASACNGCRRRGSPCISQEFPEDLEEAVMNIGTTSSDGTPFDGRTRATTPSERTDQILTPVSTVREPSQYPRSPEQHLPTGNDTSQRKYERLSRFLHELLPSRADRESIFKASRHSSILSHELLTTPYITLHQNGLQTPESLLMTPQPNSHPVLIARYMLQFALFLQHLPPDLYKEIQGLSEPPRATMERLADAAIYHVTTNEALINSIESLECIMLESLYQVNLGNLRRSWVAGRRAMSLAQFMGFHRPDNQTRYYKALDPKTNYDPQIMWLRIIILDRQLCLLLGLPEGCTDHTMASSETRIANNCPMGRLEQLHCVAMSRILDRNASQPSGRDLTATRAIDLELQKAAGSLPSKWWLAPKLDSASTDLQAMFWDTRRLVLQICHYNLLNQLHLPYMLRPSTAGNKYEYSRITCVNASREVLSRYNSLRSFNRIAYSCRTVDFLALMAAMALLLAHMDSYRDGAENLLANQYLSDRGMIEQVQEHMSEINRLNSDELSAQSADLLKSLLAIDLEKGKGRVSVREAGSEGMLPQDGMGPEEESVVRVHIPYFGIIRIAREKQHATTASKPPVDRSPSSNSDAQLRFSTLTHPSNALPLSPNTTSNPLSFAVADAAAPHEFTTPFAHQQQQPCQPTFSNPGLSLTPSPLMQGGYPDLAAGSEDWAFQRVDMAFFESIMRNVGGDL.

A DNA-binding region (zn(2)-C6 fungal-type) is located at residues 28–58; that stretch reads CWECKRRKMKCRFDPRIASACNGCRRRGSPC. Disordered stretches follow at residues 75-130 and 606-626; these read GTTS…TSQR and QHAT…NSDA. Residues 89-109 are compositionally biased toward polar residues; that stretch reads RATTPSERTDQILTPVSTVRE.

The protein localises to the nucleus. Transcription factor involved in regulation of the dehydrocurvularin biosynthesis gene cluster. In Aspergillus terreus, this protein is Dehydrocurvularin biosynthesis regulator.